Reading from the N-terminus, the 103-residue chain is Putative membrane protein insertion efficiency factor (103 aa).

It belongs to the UPF0161 family.

Its subcellular location is the cell inner membrane. In terms of biological role, could be involved in insertion of integral membrane proteins into the membrane. This is Putative membrane protein insertion efficiency factor from Chlamydia abortus (strain DSM 27085 / S26/3) (Chlamydophila abortus).